Here is a 484-residue protein sequence, read N- to C-terminus: uncharacterized protein (484 aa).

An FAD-binding PCMH-type domain is found at 47-226 (TLPIPAAVVK…TEVTVKIFKF (180 aa)).

Belongs to the FAD-binding oxidoreductase/transferase type 4 family.

This is an uncharacterized protein from Escherichia coli (strain K12).